We begin with the raw amino-acid sequence, 480 residues long: Proline--tRNA ligase (480 aa).

Belongs to the class-II aminoacyl-tRNA synthetase family. ProS type 3 subfamily. As to quaternary structure, homodimer.

Its subcellular location is the cytoplasm. The catalysed reaction is tRNA(Pro) + L-proline + ATP = L-prolyl-tRNA(Pro) + AMP + diphosphate. Its function is as follows. Catalyzes the attachment of proline to tRNA(Pro) in a two-step reaction: proline is first activated by ATP to form Pro-AMP and then transferred to the acceptor end of tRNA(Pro). The chain is Proline--tRNA ligase from Metallosphaera sedula (strain ATCC 51363 / DSM 5348 / JCM 9185 / NBRC 15509 / TH2).